A 451-amino-acid polypeptide reads, in one-letter code: AP-3 complex subunit mu (451 aa).

The MHD domain occupies 191-450 (NNEIYVDLVE…TSRAGDYIVR (260 aa)).

This sequence belongs to the adaptor complexes medium subunit family. In terms of assembly, adaptor protein complex 3 (AP-3) is a heterotetramer composed of 2 large adaptins (APL5 and APL6), a medium adaptin (APM3) and a small adaptin (APS3).

Its subcellular location is the golgi apparatus. The protein resides in the cytoplasmic vesicle membrane. Its function is as follows. Part of the AP-3 complex, an adaptor-related complex which is not clathrin-associated. The complex is associated with the Golgi region as well as more peripheral structures. It facilitates the budding of vesicles from the Golgi membrane and may be directly involved in trafficking to the vacuole. This Eremothecium gossypii (strain ATCC 10895 / CBS 109.51 / FGSC 9923 / NRRL Y-1056) (Yeast) protein is AP-3 complex subunit mu (APM3).